Consider the following 71-residue polypeptide: UPF0346 protein BcerKBAB4_2120 (71 aa).

Belongs to the UPF0346 family.

This is UPF0346 protein BcerKBAB4_2120 from Bacillus mycoides (strain KBAB4) (Bacillus weihenstephanensis).